Reading from the N-terminus, the 223-residue chain is MNMKNLYLAILYLLAASTLPFAIASDPSPLQDFCIGVNTPANALFVNGKFCKDPKLVTADDFYFSGLDKARTTESSPVGSNVTTVNVNQIPGLNTLGISLVRIDYGINGQNPPHTHPRATEILLVQEGTLFVGFFSSFPENRLFNKTLNKGDVFVFPEGLIHFQVNIGKQPAVAFASLSSQNPGVIIIGNTLFGSKPPIDPNVLAKAFQLDPKVIIQLQKKFG.

The signal sequence occupies residues 1 to 24; sequence MNMKNLYLAILYLLAASTLPFAIA. A disulfide bridge connects residues cysteine 34 and cysteine 51. Residues 65-216 form the Cupin type-1 domain; the sequence is SGLDKARTTE…AFQLDPKVII (152 aa). N-linked (GlcNAc...) asparagine glycosylation occurs at asparagine 81. Mn(2+)-binding residues include histidine 114, histidine 116, and glutamate 121. An N-linked (GlcNAc...) asparagine glycan is attached at asparagine 145. Residue histidine 162 participates in Mn(2+) binding.

The protein belongs to the germin family. As to quaternary structure, oligomer (believed to be a pentamer but probably hexamer).

It localises to the secreted. The protein localises to the extracellular space. It is found in the apoplast. Functionally, may play a role in plant defense. Probably has no oxalate oxidase activity even if the active site is conserved. The chain is Putative germin-like protein subfamily 1 member 12 from Arabidopsis thaliana (Mouse-ear cress).